The following is a 122-amino-acid chain: Small ribosomal subunit protein uS10y (122 aa).

This sequence belongs to the universal ribosomal protein uS10 family.

The sequence is that of Small ribosomal subunit protein uS10y (RPS20B) from Arabidopsis thaliana (Mouse-ear cress).